The following is a 270-amino-acid chain: B3 domain-containing protein Os03g0212300 (270 aa).

2 consecutive DNA-binding regions (TF-B3) follow at residues 13–110 (FEFF…FDET) and 158–265 (VTLR…RKAD).

The protein localises to the nucleus. This chain is B3 domain-containing protein Os03g0212300, found in Oryza sativa subsp. japonica (Rice).